Reading from the N-terminus, the 405-residue chain is Solute carrier family 35 member E2A (405 aa).

The tract at residues 1–22 (MSAAAKSQVPEEAAPGCEEEPK) is disordered. Transmembrane regions (helical) follow at residues 76–96 (LIYL…NKYI), 106–126 (MLGA…IFVP), 142–162 (FIMT…LGLV), 167–187 (VAVS…VIMS), 195–215 (TGLL…LCTA), 219–241 (SFNI…QNVF), 264–284 (AAAV…PVIG), 296–316 (IVLL…TAYA), 326–346 (FSVA…IVFG), and 347–367 (NKIT…VLLY). Positions 380-405 (SLVTATSRNPEDDTEPLVPQDSRQHH) are disordered.

Belongs to the TPT transporter family. SLC35E subfamily.

The protein resides in the membrane. Functionally, putative transporter. In Mus musculus (Mouse), this protein is Solute carrier family 35 member E2A (Slc35e2a).